The primary structure comprises 411 residues: Putative polysaccharide ligase RC0486 (411 aa).

Transmembrane regions (helical) follow at residues 15–35 (LGML…LISF), 78–98 (GITM…IHLI), 101–121 (LATF…SNSA), 133–153 (LIFG…SNGF), 166–186 (MLDR…IILL), 207–227 (ISDS…FILT), 233–253 (IFFK…PVIA), 328–348 (ILQI…CLVY), 361–381 (NFKA…MISY), and 383–403 (IWQI…KLLV).

The protein belongs to the O-antigen ligase family.

It is found in the membrane. In Rickettsia conorii (strain ATCC VR-613 / Malish 7), this protein is Putative polysaccharide ligase RC0486.